Here is a 638-residue protein sequence, read N- to C-terminus: Polypeptide N-acetylgalactosaminyltransferase 15 (638 aa).

Topologically, residues 1-12 (MLPRKRPRSGRS) are cytoplasmic. A helical; Signal-anchor for type II membrane protein membrane pass occupies residues 13–35 (RLQFLLLFLTLGCVLMMVILLHP). At 36–638 (PPPTLHQAVT…FDQIHPVDER (603 aa)) the chain is on the lumenal side. Residues 134–157 (KDWRTEEDGEESEEVLTPLGPDSD) are disordered. 5 cysteine pairs are disulfide-bonded: Cys181–Cys411, Cys402–Cys481, Cys516–Cys535, Cys561–Cys574, and Cys602–Cys619. A catalytic subdomain A region spans residues 190-299 (LPTASVILCF…PGWLEPLLSR (110 aa)). Substrate is bound by residues Asp231 and Arg260. Mn(2+) contacts are provided by Asp283, His285, and His416. The segment at 357-419 (PVRSPVVPRE…PCSRVGHIYR (63 aa)) is catalytic subdomain B. Substrate is bound at residue Arg419. The Ricin B-type lectin domain occupies 503–630 (RFSGKLHNTG…GKTSQLWRFD (128 aa)). Asn573 carries an N-linked (GlcNAc...) asparagine glycan.

The protein belongs to the glycosyltransferase 2 family. GalNAc-T subfamily. Requires Mn(2+) as cofactor. As to expression, specifically expressed in testis.

It localises to the golgi apparatus membrane. It catalyses the reaction L-seryl-[protein] + UDP-N-acetyl-alpha-D-galactosamine = a 3-O-[N-acetyl-alpha-D-galactosaminyl]-L-seryl-[protein] + UDP + H(+). It carries out the reaction L-threonyl-[protein] + UDP-N-acetyl-alpha-D-galactosamine = a 3-O-[N-acetyl-alpha-D-galactosaminyl]-L-threonyl-[protein] + UDP + H(+). The protein operates within protein modification; protein glycosylation. Catalyzes the initial reaction in O-linked oligosaccharide biosynthesis, the transfer of an N-acetyl-D-galactosamine residue to a serine or threonine residue on the protein receptor. Although it displays a much weaker activity toward all substrates tested compared to GALNT2, it is able to transfer up to seven GalNAc residues to the Muc5AC peptide, suggesting that it can fill vicinal Thr/Ser residues in cooperation with other GALNT proteins. Prefers Muc1a as substrate. This chain is Polypeptide N-acetylgalactosaminyltransferase 15 (Galnt15), found in Mus musculus (Mouse).